The chain runs to 924 residues: Protein translocase subunit SecA (924 aa).

Residues glutamine 87, 105-109 (GEGKT), and aspartate 515 each bind ATP. Residues cysteine 908, cysteine 910, cysteine 919, and histidine 920 each coordinate Zn(2+).

The protein belongs to the SecA family. As to quaternary structure, monomer and homodimer. Part of the essential Sec protein translocation apparatus which comprises SecA, SecYEG and auxiliary proteins SecDF-YajC and YidC. It depends on Zn(2+) as a cofactor.

It localises to the cell inner membrane. It is found in the cytoplasm. The enzyme catalyses ATP + H2O + cellular proteinSide 1 = ADP + phosphate + cellular proteinSide 2.. Its function is as follows. Part of the Sec protein translocase complex. Interacts with the SecYEG preprotein conducting channel. Has a central role in coupling the hydrolysis of ATP to the transfer of proteins into and across the cell membrane, serving both as a receptor for the preprotein-SecB complex and as an ATP-driven molecular motor driving the stepwise translocation of polypeptide chains across the membrane. The polypeptide is Protein translocase subunit SecA (Cupriavidus pinatubonensis (strain JMP 134 / LMG 1197) (Cupriavidus necator (strain JMP 134))).